Consider the following 312-residue polypeptide: tRNA uridine(34) hydroxylase (312 aa).

A Rhodanese domain is found at 147-237 (SDRNVIFIDM…GILGYVHDAN (91 aa)). Cysteine 201 acts as the Cysteine persulfide intermediate in catalysis.

Belongs to the TrhO family.

It catalyses the reaction uridine(34) in tRNA + AH2 + O2 = 5-hydroxyuridine(34) in tRNA + A + H2O. In terms of biological role, catalyzes oxygen-dependent 5-hydroxyuridine (ho5U) modification at position 34 in tRNAs. The polypeptide is tRNA uridine(34) hydroxylase (Buchnera aphidicola subsp. Schizaphis graminum (strain Sg)).